Here is a 279-residue protein sequence, read N- to C-terminus: HTH-type transcriptional regulator HdfR (279 aa).

Residues 1–58 (MDTELLKTFLEVSRTRHFGRAAESLYLTQSAVSFRIRQLENQLGVNLFTRHRNNIRLT) enclose the HTH lysR-type domain. A DNA-binding region (H-T-H motif) is located at residues 18 to 37 (FGRAAESLYLTQSAVSFRIR).

The protein belongs to the LysR transcriptional regulatory family.

In terms of biological role, negatively regulates the transcription of the flagellar master operon flhDC by binding to the upstream region of the operon. This is HTH-type transcriptional regulator HdfR from Escherichia coli (strain SE11).